Reading from the N-terminus, the 372-residue chain is 3-galactosyl-N-acetylglucosaminide 4-alpha-L-fucosyltransferase FUT3 (372 aa).

The Cytoplasmic segment spans residues 1-15 (MDPLGAAKPQWPWRR). The helical; Signal-anchor for type II membrane protein transmembrane segment at 16-34 (CLAALLFQLLVAVCFFSYL) threads the bilayer. Residues 35–372 (RVSRDDATGS…TMRSIAAWFT (338 aa)) lie on the Lumenal side of the membrane. Residues 40–69 (DATGSPRPGLMAVEPVTGAPSGSSRQDTTP) are disordered. Residues Asn165 and Asn196 are each glycosylated (N-linked (GlcNAc...) asparagine).

The protein belongs to the glycosyltransferase 10 family. Post-translationally, glycosylated.

It is found in the golgi apparatus. The protein localises to the golgi stack membrane. The enzyme catalyses a beta-D-galactosyl-(1-&gt;3)-N-acetyl-beta-D-glucosaminyl derivative + GDP-beta-L-fucose = a beta-D-galactosyl-(1-&gt;3)-[alpha-L-fucosyl-(1-&gt;4)]-N-acetyl-beta-D-glucosaminyl derivative + GDP + H(+). The catalysed reaction is an N-acetyl-alpha-neuraminyl-(2-&gt;3)-beta-D-galactosyl-(1-&gt;4)-N-acetyl-beta-D-glucosaminyl derivative + GDP-beta-L-fucose = an alpha-Neu5Ac-(2-&gt;3)-beta-D-Gal-(1-&gt;4)-[alpha-L-Fuc-(1-&gt;3)]-beta-D-GlcNAc derivative + GDP + H(+). It carries out the reaction a beta-D-galactosyl-(1-&gt;4)-N-acetyl-beta-D-glucosaminyl derivative + GDP-beta-L-fucose = a beta-D-galactosyl-(1-&gt;4)-[alpha-L-fucosyl-(1-&gt;3)]-N-acetyl-beta-D-glucosaminyl derivative + GDP + H(+). It catalyses the reaction an alpha-Neu5Ac-(2-&gt;3)-beta-D-Gal-(1-&gt;4)-beta-D-GlcNAc-(1-&gt;3)-beta-D-Gal-(1-&gt;4)-[alpha-L-Fuc-(1-&gt;3)]-beta-D-GlcNAc derivative + GDP-beta-L-fucose = an alpha-Neu5Ac-(2-&gt;3)-beta-D-Gal-(1-&gt;4)-[alpha-L-Fuc-(1-&gt;3)]-beta-D-GlcNAc-(1-&gt;3)-beta-D-Gal-(1-&gt;4)-[alpha-L-Fuc-(1-&gt;3)]-beta-D-GlcNAc derivative + GDP + H(+). The enzyme catalyses Lc4Cer + GDP-beta-L-fucose = a lactoside III(4)-a-Fuc-Lc4Cer + GDP + H(+). The catalysed reaction is a beta-D-Gal-(1-&gt;3)-beta-D-GlcNAc-(1-&gt;3)-beta-D-Gal-(1-&gt;4)-beta-D-Glc-(1&lt;-&gt;1')-Cer(d18:1(4E)) + GDP-beta-L-fucose = a III(4)-a-Fuc-Lc4Cer(d18:1(4E)) + GDP + H(+). It carries out the reaction N-acetyl-alpha-neuraminosyl-(2-&gt;3)-beta-D-galactosyl-(1-&gt;3)-[N-acetyl-alpha-neuraminosyl-(2-&gt;6)]-N-acetyl-beta-D-glucosaminyl-(1-&gt;3)-beta-D-galactosyl-(1-&gt;4)-beta-D-glucosyl-(1&lt;-&gt;1')-N-acyl-sphing-4-enine + GDP-beta-L-fucose = N-acetyl-alpha-neuraminosyl-(2-&gt;3)-beta-D-galactosyl-(1-&gt;3)-alpha-L-fucosyl-(1-&gt;4)-[N-acetyl-alpha-neuraminosyl-(2-&gt;6)-N-acetyl-beta-D-glucosaminyl-(1-&gt;3)]-beta-D-galactosyl-(1-&gt;4)-beta-D-glucosyl-(1&lt;-&gt;1')-N-acyl-sphing-4-enine + GDP + H(+). It catalyses the reaction N-acetyl-alpha-neuraminosyl-(2-&gt;3)-beta-D-galactosyl-(1-&gt;3)-N-acetyl-beta-D-glucosaminyl-(1-&gt;3)-beta-D-galactosyl-(1-&gt;4)-beta-D-glucosyl-(1&lt;-&gt;1')-N-acyl-sphing-4-enine + GDP-beta-L-fucose = N-acetyl-alpha-neuraminosyl-(2-&gt;3)-beta-D-galactosyl-(1-&gt;3)-alpha-L-fucosyl-(1-&gt;4)-[N-acetyl-beta-D-glucosaminyl-(1-&gt;3)]-beta-D-galactosyl-(1-&gt;4)-beta-D-glucosyl-(1&lt;-&gt;1')-N-acyl-sphing-4-enine + GDP + H(+). The enzyme catalyses beta-D-galactosyl-(1-&gt;3)-N-acetyl-D-glucosamine + GDP-beta-L-fucose = beta-D-galactosyl-(1-&gt;3)-[alpha-L-fucosyl-(1-&gt;4)]-N-acetyl-D-glucosamine + GDP + H(+). The catalysed reaction is alpha-L-Fuc-(1-&gt;2)-beta-D-Gal-(1-&gt;3)-D-GlcNAc + GDP-beta-L-fucose = alpha-L-Fuc-(1-&gt;2)-beta-D-Gal-(1-&gt;3)-[alpha-L-Fuc-(1-&gt;4)]-D-GlcNAc + GDP + H(+). It carries out the reaction alpha-L-Fuc-(1-&gt;2)-beta-D-Gal-(1-&gt;4)-D-GlcNAc + GDP-beta-L-fucose = alpha-L-Fuc-(1-&gt;2)-beta-D-Gal-(1-&gt;4)-[alpha-L-Fuc-(1-&gt;3)]-D-GlcNAc + GDP + H(+). It catalyses the reaction beta-D-galactosyl-(1-&gt;4)-N-acetyl-D-glucosamine + GDP-beta-L-fucose = beta-D-galactosyl-(1-&gt;4)-[alpha-L-fucosyl-(1-&gt;3)]-N-acetyl-D-glucosamine + GDP + H(+). The enzyme catalyses lactose + GDP-beta-L-fucose = beta-D-galactosyl-(1-&gt;4)-[alpha-L-fucosyl-(1-&gt;3)]-D-glucose + GDP + H(+). The catalysed reaction is an alpha-Neu5Ac-(2-&gt;3)-beta-D-Gal-(1-&gt;3)-D-GlcNAc derivative + GDP-beta-L-fucose = an alpha-Neu5Ac-(2-&gt;3)-beta-D-Gal-(1-&gt;3)-[alpha-L-Fuc-(1-&gt;4)]-beta-D-GlcNAc derivative + GDP + H(+). It participates in protein modification; protein glycosylation. Catalyzes the transfer of L-fucose, from a guanosine diphosphate-beta-L-fucose, to both the subterminal N-acetyl glucosamine (GlcNAc) of type 1 chain (beta-D-Gal-(1-&gt;3)-beta-D-GlcNAc) glycolipids and oligosaccharides via an alpha(1,4) linkage, and the subterminal glucose (Glc) or GlcNAc of type 2 chain (beta-D-Gal-(1-&gt;4)-beta-D-GlcNAc) oligosaccharides via an alpha(1,3) linkage, independently of the presence of terminal alpha-L-fucosyl-(1,2) moieties on the terminal galactose of these acceptors and participates in the blood groups Lewis determination and expression of Lewis a (Le(a)), lewis b (Le(b)), Lewis x/SSEA-1 (Le(x)) and lewis y (Le(y)) antigens. Also catalyzes the transfer of L-fucose to subterminal GlcNAc of sialyl- and disialyl-lactotetraosylceramide to produce sialyl Lewis a (sLe(a)) and disialyl Lewis a via an alpha(1,4) linkage and therefore may regulate cell surface sialyl Lewis a expression and consequently regulates adhesive properties to E-selectin, cell proliferation and migration. Catalyzes the transfer of an L-fucose to 3'-sialyl-N-acetyllactosamine by an alpha(1,3) linkage, which allows the formation of sialyl-Lewis x structure and therefore may regulate the sialyl-Lewis x surface antigen expression and consequently adhesive properties to E-selectin. Prefers type 1 chain over type 2 acceptors. Type 1 tetrasaccharide is a better acceptor than type 1 disaccharide suggesting that a beta anomeric configuration of GlcNAc in the substrate is preferred. Lewis-positive (Le(+)) individuals have an active enzyme while Lewis-negative (Le(-)) individuals have an inactive enzyme. The chain is 3-galactosyl-N-acetylglucosaminide 4-alpha-L-fucosyltransferase FUT3 from Pan troglodytes (Chimpanzee).